A 132-amino-acid chain; its full sequence is Small ribosomal subunit protein uS8c (132 aa).

The protein belongs to the universal ribosomal protein uS8 family. As to quaternary structure, part of the 30S ribosomal subunit.

The protein localises to the plastid. It is found in the chloroplast. One of the primary rRNA binding proteins, it binds directly to 16S rRNA central domain where it helps coordinate assembly of the platform of the 30S subunit. This Adiantum capillus-veneris (Maidenhair fern) protein is Small ribosomal subunit protein uS8c (rps8).